The following is a 484-amino-acid chain: Fumarate hydratase class II (484 aa).

The disordered stretch occupies residues 1–22 (MPSILDLPIGTGATGKRKESDS). Substrate-binding positions include 110 to 112 (SGT), 141 to 144 (HPND), 151 to 153 (SSN), and threonine 199. Histidine 200 functions as the Proton donor/acceptor in the catalytic mechanism. Serine 330 is a catalytic residue. Substrate is bound by residues serine 331 and 336–338 (KVN).

This sequence belongs to the class-II fumarase/aspartase family. Fumarase subfamily. In terms of assembly, homotetramer.

The protein resides in the cytoplasm. The catalysed reaction is (S)-malate = fumarate + H2O. It functions in the pathway carbohydrate metabolism; tricarboxylic acid cycle; (S)-malate from fumarate: step 1/1. Involved in the TCA cycle. Catalyzes the stereospecific interconversion of fumarate to L-malate. The protein is Fumarate hydratase class II of Methanosarcina acetivorans (strain ATCC 35395 / DSM 2834 / JCM 12185 / C2A).